The chain runs to 122 residues: Protein preY, mitochondrial (122 aa).

Residues 1-40 constitute a mitochondrion transit peptide; the sequence is MLAVRAWGRTYNTLVQRKLNAACPTGALPAVTLRPLHCSL. The 47-residue stretch at 56-102 folds into the TRM112 domain; that stretch reads DPTLLQFLVCPLSRKSLRYEESTNELINDELGIAYPIVDGIPNMIPQ.

This sequence belongs to the PREY family.

Its subcellular location is the mitochondrion. Its function is as follows. In mitochondria, S-adenosylmethionine-dependent methyltransferase chaperone that supports both coenzyme Q biosynthesis and NADH:ubiquinone oxidoreductase complex (complex I, MT-ND1) assembly. In Xenopus tropicalis (Western clawed frog), this protein is Protein preY, mitochondrial (pyurf).